A 1135-amino-acid polypeptide reads, in one-letter code: Envelopment polyprotein (1135 aa).

The first 18 residues, 1-18 (MGIWKWLVMASLVWPVLT), serve as a signal peptide directing secretion. Over 19 to 485 (LRNVYDMKIE…VPGFHGWATA (467 aa)) the chain is Lumenal. Disulfide bonds link Cys-29/Cys-151, Cys-63/Cys-157, Cys-109/Cys-128, Cys-133/Cys-138, Cys-175/Cys-185, Cys-210/Cys-247, Cys-234/Cys-351, Cys-376/Cys-435, Cys-380/Cys-389, Cys-405/Cys-424, and Cys-452/Cys-475. A glycan (N-linked (GlcNAc...) asparagine; by host) is linked at Asn-134. N-linked (GlcNAc...) asparagine; by host glycosylation is found at Asn-235 and Asn-347. Asn-399 is a glycosylation site (N-linked (GlcNAc...) asparagine; by host). The chain crosses the membrane as a helical span at residues 486 to 506 (ALLVTFCFGWVLIPAITFIIL). Residues 507 to 627 (TVLKFIANIF…LNLFRYKSRC (121 aa)) are Cytoplasmic-facing. Residues 516–533 (FHTSNQENRLKSVLRKIK) are binding to the ribonucleoprotein. CCHC-type zinc fingers lie at residues 545–565 (CDVCKYECETYKELKAHGVSC) and 570–591 (CPYCFTHCEPTEAAFQAHYKVC). 3 binding to the ribonucleoprotein regions span residues 588-605 (YKVCQVTHRFRDDLKKTV), 592-603 (QVTHRFRDDLKK), and 611-625 (TPGCYRTLNLFRYKS). The 24-residue stretch at 611-634 (TPGCYRTLNLFRYKSRCYIFTMWI) folds into the ITAM domain. Positions 615-618 (YRTL) match the YxxL motif. The chain crosses the membrane as a helical span at residues 628–648 (YIFTMWIFLLVLESILWAASA). Residues 649–1105 (SETPLTPVWN…EWISGIFSGN (457 aa)) lie on the Lumenal side of the membrane. 8 disulfide bridges follow: Cys-735/Cys-770, Cys-739/Cys-777, Cys-751/Cys-885, Cys-765/Cys-896, Cys-780/Cys-904, Cys-806/Cys-815, Cys-823/Cys-832, and Cys-863/Cys-867. The fusion loop stretch occupies residues 757–777 (YQYETSWGCNPSDCPGVGTGC). An N-linked (GlcNAc...) asparagine; by host glycan is attached at Asn-928. Cystine bridges form between Cys-970–Cys-1000, Cys-993–Cys-1045, Cys-1010–Cys-1015, Cys-1046–Cys-1051, and Cys-1085–Cys-1089. A helical transmembrane segment spans residues 1106–1126 (WIVLIVLCVFLLFSLVLLSIL). The interval 1122–1135 (LLSILCPVRKHKKS) is binding to the ribonucleoprotein. At 1127–1135 (CPVRKHKKS) the chain is on the cytoplasmic side.

The protein belongs to the hantavirus envelope glycoprotein family. In terms of assembly, homodimer. Homotetramer; forms heterotetrameric Gn-Gc spikes in the pre-fusion conformation. Interacts (via C-terminus) with the nucleoprotein. Interacts with host TUFM; this interaction contributes to the virus-induced degradation of mitochondria by autophagy, which leads to degradation of host MAVS and inhibition of type I interferon (IFN) responses. Interacts with host MAP1LC3B; this interaction contributes to the virus-induced degradation of mitochondria by autophagy, which leads to degradation of host MAVS and inhibition of type I interferon (IFN) responses. As to quaternary structure, homotetramer; forms heterotetrameric Gn-Gc spikes in the pre-fusion conformation. Homotrimer; forms homotrimer in the post-fusion conformation at acidic pH. Interacts (via C-terminus) with the nucleoprotein. Specific enzymatic cleavage in vivo yield the mature proteins Glycoprotein N and Glycoprotein C.

It localises to the virion membrane. It is found in the host cell surface. Its subcellular location is the host Golgi apparatus membrane. The protein resides in the host endoplasmic reticulum membrane. The protein localises to the host mitochondrion. Its function is as follows. Forms homotetramers with glycoprotein C at the surface of the virion. Attaches the virion to host cell receptors including integrin ITGAV/ITGB3. This attachment induces virion internalization predominantly through clathrin-dependent endocytosis. May also bind to host C1QBP for virus entry into the host cell. Mediates the assembly and budding of infectious virus particles through its interaction with the nucleocapsid protein and the viral genome. May dysregulate normal immune and endothelial cell responses through an ITAM motif. Translocates to mitochondria, binds to host TUFM and recruits MAP1LC3B. These interactions induce mitochondrial autophagy and therefore destruction of host MAVS leading to inhibition of type I interferon (IFN) responses. Concomitant breakdown of glycoprotein N is apparently prevented by the nucleoprotein that may inhibit Gn-stimulated autophagosome-lysosome fusion. Interacts with the viral genomic RNA. Functionally, homodimer. Homotetramer; forms heterotetrameric Gn-Gc spikes in the pre-fusion conformation. Attaches the virion to host cell receptors including integrin ITGAV/ITGB3. This attachment induces virion internalization predominantly through clathrin-dependent endocytosis. May also bind to host C1QBP for virus entry into the host cell. Class II fusion protein that promotes fusion of viral membrane with host endosomal membrane after endocytosis of the virion. In Apodemus agrarius (Eurasian field mouse), this protein is Envelopment polyprotein (GP).